The sequence spans 1462 residues: uncharacterized protein (1462 aa).

Residues 119 to 139 traverse the membrane as a helical segment; the sequence is TGYITSLCLSAILKFFSFRII. Residues S411 and S420 each carry the phosphoserine modification. The 190-residue stretch at 541-730 folds into the SEC7 domain; it reads TLIESKKRKA…SEIYKAIKEN (190 aa). The HEAT repeat unit spans residues 1102 to 1139; the sequence is ENSEDWGLFSKLCNLLNDKNIVVRNQSLSLFHQLVNKY.

It is found in the cytoplasm. It localises to the golgi apparatus membrane. This is an uncharacterized protein from Schizosaccharomyces pombe (strain 972 / ATCC 24843) (Fission yeast).